The chain runs to 750 residues: Signal transducer and activator of transcription 1-alpha/beta (750 aa).

N-acetylserine is present on Ser-2. Lys-114, Lys-175, Lys-296, Lys-366, Lys-525, and Lys-637 each carry N6-methyllysine. Residues 136-317 adopt a coiled-coil conformation; sequence LDKQKELDSK…LFQQLIQSSF (182 aa). In terms of domain architecture, SH2 spans 573–670; sequence WNDGCIMGFI…ENPLKYLYPN (98 aa). At Glu-657 the chain carries ADP-ribosyl glutamic acid; by PARP14. An N6-methyllysine modification is found at Lys-665. At Tyr-701 the chain carries Phosphotyrosine; by JAK1, JAK2 or TYK2. Lys-703 participates in a covalent cross-link: Glycyl lysine isopeptide (Lys-Gly) (interchain with G-Cter in SUMO1); alternate. Lys-703 is covalently cross-linked (Glycyl lysine isopeptide (Lys-Gly) (interchain with G-Cter in SUMO2); alternate). Glu-705 is modified (ADP-ribosyl glutamic acid; by PARP14). A Phosphoserine; by IKKE modification is found at Ser-708. Ser-727 bears the Phosphoserine; by CAMK2 and MAPK14 mark. Position 745 is a phosphoserine; by IKKE (Ser-745). At Thr-749 the chain carries Phosphothreonine; by IKKB.

The protein belongs to the transcription factor STAT family. Isoform alpha homodimerizes upon IFN-gamma induced phosphorylation. Heterodimer with STAT2 upon IFN-alpha/beta induced phosphorylation. The heterodimer STAT1:STAT2 forms the interferon-stimulated gene factor 3 complex (ISGF3) with IRF9. Interacts (phosphorylated at Ser-727) with PIAS1; the interaction results in release of STAT1 from its target gene. Interacts with IFNAR1; the interaction requires the phosphorylation of IFNAR1 at 'Tyr-466'. Interacts with IFNAR2. Found in a complex with NMI and CREBBP/CBP. Interacts with NMI which is required for CREBBP/CBP recruitment to the complex. Interacts with PTK2/FAK1. Interacts with SRC. Interacts with ERBB4 (phosphorylated). Interacts with PARP9 and DTX3L independently of IFN-beta or IFN-gamma-mediated STAT1 'Tyr-701' phosphorylation. Interacts with histone acetyltransferase EP300/p300 in response to INF-gamma stimulation. Independently of its phosphorylation status, interacts with OTOP1. Interacts with IFNGR1. Interacts with STAT4. In terms of assembly, (Microbial infection) Interacts with Sendai virus C', C, Y1 and Y2 proteins, preventing activation of ISRE and GAS promoter. As to quaternary structure, (Microbial infection) Interacts with Nipah virus P, V and W proteins preventing activation of ISRE and GAS promoter. (Microbial infection) Interacts with Rabies virus phosphoprotein preventing activation of ISRE and GAS promoter. In terms of assembly, (Microbial infection) Interacts with HCV core protein; the interaction results in STAT1 degradation. As to quaternary structure, (Microbial infection) Interacts with ebolavirus protein VP24. (Microbial infection) Interacts with Epstein-Barr virus (EBV) tegument protein BGLF2; this interaction leads to STAT1 dephosphorylation and inhibition. In terms of assembly, (Microbial infection) Interacts (via N-terminus) with measles V protein; this interaction inhibits STAT1 phosphorylation by Jak1 and thereby the type I interferon signaling pathway. Deubiquitinated by USP13; leading to STAT1 stabilization and positive regulation of type I and type II IFN signalings. In terms of processing, phosphorylated on tyrosine and serine residues in response to a variety of cytokines/growth hormones including IFN-alpha, IFN-gamma, PDGF and EGF. Activated KIT promotes phosphorylation on tyrosine residues and subsequent translocation to the nucleus. Upon EGF stimulation, phosphorylation on Tyr-701 (lacking in beta form) by JAK1, JAK2 or TYK2 promotes dimerization and subsequent translocation to the nucleus. Growth hormone (GH) activates STAT1 signaling only via JAK2. Tyrosine phosphorylated in response to constitutively activated FGFR1, FGFR2, FGFR3 and FGFR4. Phosphorylation on Ser-727 by several kinases including MAPK14, ERK1/2, CAMK2/CAMKII and CK2 in response to IFN-gamma stimulation, is required for maximal transcriptional activity. Phosphorylated on Ser-727 by CAMK2/CAMKII in response to IFN-gamma stimulation and calcium mobilization, promoting activity. Phosphorylated by CAMK2/CAMKII in response to IFN-beta stimulation and calcium mobilization in epithelial cells, promoting activity. Phosphorylation on Ser-727 promotes sumoylation though increasing interaction with PIAS. Phosphorylation on Ser-727 by PRKCD induces apoptosis in response to DNA-damaging agents. Phosphorylated on tyrosine residues when PTK2/FAK1 is activated; most likely this is catalyzed by a SRC family kinase. Dephosphorylation on tyrosine residues by PTPN2 negatively regulates interferon-mediated signaling. Upon viral infection or IFN induction, phosphorylation on Ser-708 occurs much later than phosphorylation on Tyr-701 and is required for the binding of ISGF3 on the ISREs of a subset of IFN-stimulated genes IKBKE-dependent. Phosphorylation at Tyr-701 and Ser-708 are mutually exclusive, phosphorylation at Ser-708 requires previous dephosphorylation of Tyr-701. Phosphorylation at Thr-749 by IKBKB/IKKB promotes transcriptional activation of ARID5A and IL12B by STAT1. Phosphorylation at Thr-749 restricts interferon signaling and anti-inflammatory responses and promotes innate inflammatory responses. Post-translationally, sumoylated with SUMO1, SUMO2 and SUMO3. Sumoylation is enhanced by IFN-gamma-induced phosphorylation on Ser-727, and by interaction with PIAS proteins. Enhances the transactivation activity. ISGylated. In terms of processing, mono-ADP-ribosylated at Glu-657 and Glu-705 by PARP14; ADP-ribosylation prevents phosphorylation at Tyr-701. However, the role of ADP-ribosylation in the prevention of phosphorylation has been called into question and the lack of phosphorylation may be due to sumoylation of Lys-703. Post-translationally, monomethylated at Lys-525 by SETD2; monomethylation is necessary for phosphorylation at Tyr-701, translocation into the nucleus and activation of the antiviral defense. (Microbial infection) Ubiquitinated by Herpes simplex virus 2 E3 ubiquitin ligase ICP22.

It is found in the cytoplasm. The protein localises to the nucleus. Functionally, signal transducer and transcription activator that mediates cellular responses to interferons (IFNs), cytokine KITLG/SCF and other cytokines and other growth factors. Following type I IFN (IFN-alpha and IFN-beta) binding to cell surface receptors, signaling via protein kinases leads to activation of Jak kinases (TYK2 and JAK1) and to tyrosine phosphorylation of STAT1 and STAT2. The phosphorylated STATs dimerize and associate with ISGF3G/IRF-9 to form a complex termed ISGF3 transcription factor, that enters the nucleus. ISGF3 binds to the IFN stimulated response element (ISRE) to activate the transcription of IFN-stimulated genes (ISG), which drive the cell in an antiviral state. In response to type II IFN (IFN-gamma), STAT1 is tyrosine- and serine-phosphorylated. It then forms a homodimer termed IFN-gamma-activated factor (GAF), migrates into the nucleus and binds to the IFN gamma activated sequence (GAS) to drive the expression of the target genes, inducing a cellular antiviral state. Becomes activated in response to KITLG/SCF and KIT signaling. May mediate cellular responses to activated FGFR1, FGFR2, FGFR3 and FGFR4. Following bacterial lipopolysaccharide (LPS)-induced TLR4 endocytosis, phosphorylated at Thr-749 by IKBKB which promotes binding of STAT1 to the 5'-TTTGAGGC-3' sequence in the ARID5A promoter, resulting in transcriptional activation of ARID5A and subsequent ARID5A-mediated stabilization of IL6. Phosphorylation at Thr-749 also promotes binding of STAT1 to the 5'-TTTGAGTC-3' sequence in the IL12B promoter and activation of IL12B transcription. Involved in food tolerance in small intestine: associates with the Gasdermin-D, p13 cleavage product (13 kDa GSDMD) and promotes transcription of CIITA, inducing type 1 regulatory T (Tr1) cells in upper small intestine. The chain is Signal transducer and activator of transcription 1-alpha/beta (STAT1) from Homo sapiens (Human).